A 382-amino-acid chain; its full sequence is Porphobilinogen deaminase, chloroplastic (382 aa).

The transit peptide at 1–62 (MDIASSSLSQ…KQSSSGFVKA (62 aa)) directs the protein to the chloroplast. Dipyrromethane contacts are provided by arginine 80 and serine 82. At serine 123 the chain carries Phosphoserine. Residues 156–157 (KD), 200–206 (TASLRRK), and 223–229 (RGNVQTR) each bind dipyrromethane. The active-site Proton donor/acceptor is aspartate 157. Position 316 is an S-(dipyrrolylmethanemethyl)cysteine (cysteine 316).

Belongs to the HMBS family. As to quaternary structure, monomer. Dipyrromethane serves as cofactor.

The protein localises to the plastid. The protein resides in the chloroplast. The catalysed reaction is 4 porphobilinogen + H2O = hydroxymethylbilane + 4 NH4(+). The protein operates within porphyrin-containing compound metabolism; protoporphyrin-IX biosynthesis; coproporphyrinogen-III from 5-aminolevulinate: step 2/4. It functions in the pathway porphyrin-containing compound metabolism; chlorophyll biosynthesis. Inhibited by NH(3), heavy-metal ions, hydroxylamine and 2-bromoporphobilinogen. Not inhibited by N-ethylmaleimide. Functionally, tetrapolymerization of the monopyrrole PBG into the hydroxymethylbilane pre-uroporphyrinogen in several discrete steps. The protein is Porphobilinogen deaminase, chloroplastic (HEMC) of Arabidopsis thaliana (Mouse-ear cress).